Here is a 484-residue protein sequence, read N- to C-terminus: MTQTEKYRQLRTMIPEMRRVRRIHFVGIGGAGMGGIAEVLVNEGYQVSGSDIADNAVTERLGSLGARIFIGHGADNVSGVDVVVVSTAIKHDNPEIAAAKEKRIPIVRRAEMLAELMRYRHGVAVAGTHGKTTTTSLIASIYGQAERDPTFVIGGLLNSAGTNARLGSSRYLIAEADESDASFLHLQPMVTVVTNIEADHMDTYGGDFEKLKSTFVDFMHNLPFYGVAVVCVDDPVVRELIPRIGRQVVTYGFSDDADVQALNFVQEGHSCRFTVRRKGKDDLSLKVNLPGQHNVLNSLAAIAVATEDDIEDEAIVKALAEFQGIGRRFQHLGKFATPNGEVMLVDDYGHHPSEVLATIKAARAGWPDKRLVMAYQPHRYTRTRDLYEDFVEVLSQVDKLVLLEVYAAGETPIPGADGRALCRSIRQRGQLEPIFVASPEQLTSVLPDVLADGDLLLCQGAGNIGALSRELAATELGFAKVENN.

127-133 is an ATP binding site; it reads GTHGKTT.

This sequence belongs to the MurCDEF family.

Its subcellular location is the cytoplasm. It carries out the reaction UDP-N-acetyl-alpha-D-muramate + L-alanine + ATP = UDP-N-acetyl-alpha-D-muramoyl-L-alanine + ADP + phosphate + H(+). It participates in cell wall biogenesis; peptidoglycan biosynthesis. Cell wall formation. This is UDP-N-acetylmuramate--L-alanine ligase from Shewanella amazonensis (strain ATCC BAA-1098 / SB2B).